A 1798-amino-acid chain; its full sequence is Non-reducing polyketide synthase nscA (1798 aa).

The segment at 25-256 (RRLDQHSKDR…PLPVYDGLCH (232 aa)) is N-terminal acylcarrier protein transacylase domain (SAT). The 434-residue stretch at 392 to 825 (SSKLAIVGMA…GGNTTLLLED (434 aa)) folds into the Ketosynthase family 3 (KS3) domain. Positions 436–455 (NTHYDPTGKTENTTQTPYGN) are disordered. Residues 444 to 453 (KTENTTQTPY) show a composition bias toward polar residues. Residues cysteine 565, histidine 700, and histidine 743 each act as for beta-ketoacyl synthase activity in the active site. The malonyl-CoA:ACP transacylase (MAT) domain stretch occupies residues 931–1230 (FTGQGAYYHG…PSASAMSSCR (300 aa)). The tract at residues 1322–1458 (HQITAETVEA…AMIRFEDPVA (137 aa)) is N-terminal hotdog fold. Residues 1322–1632 (HQITAETVEA…FRRVPRLLMD (311 aa)) enclose the PKS/mFAS DH domain. The active-site Proton acceptor; for dehydratase activity is the histidine 1354. Residues 1390–1628 (HMNLTDVEVL…GMIRFRRVPR (239 aa)) are product template (PT) domain. Residues 1486 to 1632 (ASRLSKPLAY…FRRVPRLLMD (147 aa)) form a C-terminal hotdog fold region. Aspartate 1543 acts as the Proton donor; for dehydratase activity in catalysis. The interval 1685 to 1719 (MASKAPEPAPLLATSSESSTPKESPIVTPAESERA) is disordered. The segment covering 1698–1709 (TSSESSTPKESP) has biased composition (low complexity). A Carrier domain is found at 1721–1798 (PVDNNMISQC…EMTAWIEEYC (78 aa)). O-(pantetheine 4'-phosphoryl)serine is present on serine 1758.

Requires pantetheine 4'-phosphate as cofactor.

It functions in the pathway secondary metabolite biosynthesis. In terms of biological role, non-reducing polyketide synthase; part of the gene cluster that mediates the biosynthesis of neosartoricin B, a prenylated anthracenone that probably exhibits T-cell antiproliferative activity, suggestive of a physiological role as an immunosuppressive agent. The non-reducing polyketide synthase nscA probably synthesizes and cyclizes the decaketide backbone. The hydrolase nscB then mediates the product release through hydrolysis followed by spontaneous decarboxylation. The prenyltransferase nscD catalyzes the addition of the dimethylallyl group to the aromatic C5. The FAD-dependent monooxygenase nscC is then responsible for the stereospecific hydroxylation at C2. Neosartoricin B can be converted into two additional compounds neosartoricins C and D. Neosartoricin C is a spirocyclic compound that is cyclized through the attack of C3 hydroxyl on C14, followed by dehydration. On the other hand, neosartoricin D is a further cyclized compound in which attack of C2 on C14 in neosartoricin C results in the formation of the acetal-containing dioxabicyclo-octanone ring. Both of these compounds are novel and possibly represent related metabolites of the gene cluster. This is Non-reducing polyketide synthase nscA from Arthroderma benhamiae (strain ATCC MYA-4681 / CBS 112371) (Trichophyton mentagrophytes).